The chain runs to 645 residues: DNA mismatch repair protein MutL (645 aa).

This sequence belongs to the DNA mismatch repair MutL/HexB family.

Functionally, this protein is involved in the repair of mismatches in DNA. It is required for dam-dependent methyl-directed DNA mismatch repair. May act as a 'molecular matchmaker', a protein that promotes the formation of a stable complex between two or more DNA-binding proteins in an ATP-dependent manner without itself being part of a final effector complex. The sequence is that of DNA mismatch repair protein MutL from Geobacillus thermodenitrificans (strain NG80-2).